A 703-amino-acid polypeptide reads, in one-letter code: Fibulin-1 (703 aa).

The signal sequence occupies residues 1–29; that stretch reads MERAAPSRRVPLPLLLLGGLALLAAGVDA. Cystine bridges form between C36–C61, C37–C68, C50–C69, C78–C109, C91–C110, C112–C136, C113–C143, C126–C144, C180–C190, C186–C199, C201–C214, C220–C233, C227–C242, C248–C260, C266–C279, C273–C288, C294–C306, C312–C325, C319–C334, C341–C354, C360–C373, C367–C382, C384–C397, C403–C415, C411–C424, C426–C439, C445–C454, C450–C463, C465–C479, C485–C498, C494–C507, C509–C523, C529–C542, C536–C551, and C556–C577. 3 Anaphylatoxin-like domains span residues 36–76, 77–111, and 112–144; these read CCAD…LEEL, HCAT…RCCH, and CCLL…QACC. N-linked (GlcNAc...) (complex) asparagine glycosylation occurs at N98. Positions 176 to 215 constitute an EGF-like 1 domain; the sequence is LNDRCRGGGPCKQQCRDTGDEVVCSCFVGYQLLSDGVSCE. An EGF-like 2; calcium-binding domain is found at 216–261; that stretch reads DVNECITGSHSCRLGESCINTVGSFRCQRDSSCGTGYELTEDNSCK. In terms of domain architecture, EGF-like 3; calcium-binding spans 262-307; the sequence is DIDECESGIHNCLPDFICQNTLGSFRCRPKLQCKSGFIQDALGNCI. Positions 308–355 constitute an EGF-like 4; calcium-binding domain; sequence DINECLSISAPCPIGHTCINTEGSYTCQKNVPNCGRGYHLNEEGTRCV. Positions 356 to 398 constitute an EGF-like 5; calcium-binding domain; sequence DVDECAPPAEPCGKGHRCVNSPGSFRCECKTGYYFDGISRMCV. The self-association and FN1-binding; calcium is necessary for homotypic binding, but not for heterotypic binding stretch occupies residues 356–440; that stretch reads DVDECAPPAE…RLSVDGRSCE (85 aa). In terms of domain architecture, EGF-like 6; calcium-binding spans 399 to 440; the sequence is DVNECQRYPGRLCGHKCENTLGSYLCSCSVGFRLSVDGRSCE. In terms of domain architecture, EGF-like 7; calcium-binding spans 441–480; the sequence is DINECSSSPCSQECANVYGSYQCYCRRGYQLSDVDGVTCE. Residues 481–524 form the EGF-like 8; calcium-binding domain; the sequence is DIDECALPTGGHICSYRCINIPGSFQCSCPSSGYRLAPNGRNCQ. Residues 525 to 578 form the EGF-like 9; calcium-binding domain; the sequence is DIDECVTGIHNCSINETCFNIQGGFRCLAFECPENYRRSAATLQQEKTDTVRCI. N-linked (GlcNAc...) asparagine glycans are attached at residues N535 and N539.

It belongs to the fibulin family. Homomultimerizes and interacts with various extracellular matrix components such as FN1, LAMA1, LAMA2, NID, ACAN, CSPG2 and type IV collagen. Also interacts with APP and FGB. Interacts with FBLN7. Interacts with CCN3. As to quaternary structure, (Microbial infection) Interacts with human papillomavirus/HPV type 16, 18 and 31 proteins E6. In terms of tissue distribution, isoform A and isoform B are only expressed in placenta. Isoform C and isoform D are expressed in a variety of tissues and cultured cells.

The protein localises to the secreted. It is found in the extracellular space. It localises to the extracellular matrix. Incorporated into fibronectin-containing matrix fibers. May play a role in cell adhesion and migration along protein fibers within the extracellular matrix (ECM). Could be important for certain developmental processes and contribute to the supramolecular organization of ECM architecture, in particular to those of basement membranes. Has been implicated in a role in cellular transformation and tumor invasion, it appears to be a tumor suppressor. May play a role in haemostasis and thrombosis owing to its ability to bind fibrinogen and incorporate into clots. Could play a significant role in modulating the neurotrophic activities of APP, particularly soluble APP. This is Fibulin-1 (FBLN1) from Homo sapiens (Human).